Here is a 235-residue protein sequence, read N- to C-terminus: Peroxynitrite isomerase 2 (235 aa).

The GXWXGXG signature appears at 82-88; that stretch reads GVWRGEG. Residues K198 and H225 each coordinate heme b.

The protein belongs to the nitrobindin family. As to quaternary structure, homodimer. Requires heme b as cofactor.

The catalysed reaction is peroxynitrite = nitrate. It functions in the pathway nitrogen metabolism. Heme-binding protein able to scavenge peroxynitrite and to protect free L-tyrosine against peroxynitrite-mediated nitration, by acting as a peroxynitrite isomerase that converts peroxynitrite to nitrate. Therefore, this protein likely plays a role in peroxynitrite sensing and in the detoxification of reactive nitrogen and oxygen species (RNS and ROS, respectively). Is able to bind nitric oxide (NO) in vitro, but may act as a sensor of peroxynitrite levels in vivo. This is Peroxynitrite isomerase 2 from Mycolicibacterium paratuberculosis (strain ATCC BAA-968 / K-10) (Mycobacterium paratuberculosis).